A 347-amino-acid chain; its full sequence is Ultraviolet-sensitive opsin (347 aa).

The Extracellular portion of the chain corresponds to 1-37 (MSGEEEFYLFKNGSIGGPWDGPQYHIAPPWAFYLQTA). N-linked (GlcNAc...) asparagine glycosylation occurs at asparagine 12. A helical membrane pass occupies residues 38-58 (FMGFVFMVGTPLNAIVLVVTI). The Cytoplasmic segment spans residues 59–69 (KYKKLRQPLNY). Residues 70 to 90 (ILVNISFCGFLACIICIFTVF) traverse the membrane as a helical segment. Over 91 to 106 (VSSSQGYFVFGKHVCA) the chain is Extracellular. Cysteine 105 and cysteine 182 form a disulfide bridge. The chain crosses the membrane as a helical span at residues 107–127 (FEGFMGATAGLVTGWSLAFLA). Residues 128–147 (FERYIVICKPLGNFRFTAKH) lie on the Cytoplasmic side of the membrane. Residues 148-168 (ALVVVVATWVIGIGVAIPPFF) form a helical membrane-spanning segment. The Extracellular segment spans residues 169–197 (GWSRYVPEGLQCSCGPDWYTVGTKYRSEY). A helical membrane pass occupies residues 198–218 (YTWFLFIFCFIVPLSLIIFSY). Over 219-247 (SQLLSALRAVAAQQQESATTQKAEREVSR) the chain is Cytoplasmic. The chain crosses the membrane as a helical span at residues 248–268 (MVVVMVGSFCVCYVPYAALAM). The Extracellular segment spans residues 269–282 (YMVNNREHGIDLRL). Residues 283 to 303 (VTIPAFFSKSSCVYNPIIYCF) form a helical membrane-spanning segment. The residue at position 291 (lysine 291) is an N6-(retinylidene)lysine. Residues 304–347 (MNKQFRGCIMEMVCGKPMTDDSDMSSSAQRTEVSSVSSSQVSPS) lie on the Cytoplasmic side of the membrane. Cysteine 317 carries S-palmitoyl cysteine lipidation. The segment at 324–347 (DSDMSSSAQRTEVSSVSSSQVSPS) is disordered. Low complexity predominate over residues 328-347 (SSSAQRTEVSSVSSSQVSPS).

This sequence belongs to the G-protein coupled receptor 1 family. Opsin subfamily. Post-translationally, phosphorylated on some or all of the serine and threonine residues present in the C-terminal region. In terms of tissue distribution, cone photoreceptor cells.

It is found in the membrane. Visual pigments are the light-absorbing molecules that mediate vision. They consist of an apoprotein, opsin, covalently linked to cis-retinal. This is Ultraviolet-sensitive opsin from Melopsittacus undulatus (Budgerigar).